A 392-amino-acid chain; its full sequence is Formate-dependent phosphoribosylglycinamide formyltransferase (392 aa).

Residues 12–13 and Glu72 each bind N(1)-(5-phospho-beta-D-ribosyl)glycinamide; that span reads EL. ATP is bound by residues Arg104, Lys145, 150-155, 185-188, and Glu193; these read SSGKGQ and EAFV. Residues 109 to 300 enclose the ATP-grasp domain; it reads DLAARDLGLR…EFELHARAVL (192 aa). Positions 258 and 270 each coordinate Mg(2+). Residues Asp277, Lys348, and 355-356 each bind N(1)-(5-phospho-beta-D-ribosyl)glycinamide; that span reads RR.

This sequence belongs to the PurK/PurT family. In terms of assembly, homodimer.

It carries out the reaction N(1)-(5-phospho-beta-D-ribosyl)glycinamide + formate + ATP = N(2)-formyl-N(1)-(5-phospho-beta-D-ribosyl)glycinamide + ADP + phosphate + H(+). It participates in purine metabolism; IMP biosynthesis via de novo pathway; N(2)-formyl-N(1)-(5-phospho-D-ribosyl)glycinamide from N(1)-(5-phospho-D-ribosyl)glycinamide (formate route): step 1/1. Functionally, involved in the de novo purine biosynthesis. Catalyzes the transfer of formate to 5-phospho-ribosyl-glycinamide (GAR), producing 5-phospho-ribosyl-N-formylglycinamide (FGAR). Formate is provided by PurU via hydrolysis of 10-formyl-tetrahydrofolate. The protein is Formate-dependent phosphoribosylglycinamide formyltransferase of Chlorobaculum tepidum (strain ATCC 49652 / DSM 12025 / NBRC 103806 / TLS) (Chlorobium tepidum).